Consider the following 170-residue polypeptide: MTSSDQSPSHDVFVYGSFQEPAVVNLILECAPVMVSAQLHGYHLYRLKGRLHPCISPSDNGLINGKILTGLTDSQLESLDMIEGTEYVRKTVEVVLTDTLEKKQVETIVWANKDDPNMYGEWDFEEWKRLHMEKFIEAATKFMEWKKNPNGRSREEFEKFVQDDSSPASA.

15-20 (YGSFQE) contacts substrate. E83 acts as the Proton acceptor in catalysis. Residues 147 to 162 (KNPNGRSREEFEKFVQ) are compositionally biased toward basic and acidic residues. The segment at 147–170 (KNPNGRSREEFEKFVQDDSSPASA) is disordered.

It belongs to the gamma-glutamylcyclotransferase family. Ubiquitous.

In terms of biological role, putative gamma-glutamylcyclotransferase. This is Protein AIG2 A from Arabidopsis thaliana (Mouse-ear cress).